Here is a 69-residue protein sequence, read N- to C-terminus: Small integral membrane protein 20 (69 aa).

At 1–8 (MAAARNLR) the chain is on the mitochondrial matrix side. Residues 9–29 (TALIFGGFISMVGAAFYPIYF) form a helical membrane-spanning segment. The Mitochondrial intermembrane portion of the chain corresponds to 30-69 (RPLMRLEEYQKEQAVNRAGIVQEDVQPPGLKVWSDPFGRK). Phenylalanine 66 is modified (phenylalanine amide).

In terms of assembly, component of the MITRAC (mitochondrial translation regulation assembly intermediate of cytochrome c oxidase complex) complex, the core components of this complex being COA3/MITRAC12 and COX14. Interacts with COA3/MITRAC12 and COX4I1. Directly interacts with newly synthesized MT-CO1/COX1. Highly expressed in the hypothalamus, the spinal cord, and sensory ganglia (at protein level). Also expressed on in the epidermis and dermis layers of the skin (at protein level). Expressed in preadipocytes and adipocytes (at protein level). Expressed in the ovary, specifically in granulosa cells of follicles that have passed the primary stage and in oocytes (at protein level).

It localises to the mitochondrion inner membrane. Its subcellular location is the secreted. Functionally, component of the MITRAC (mitochondrial translation regulation assembly intermediate of cytochrome c oxidase complex) complex, that regulates cytochrome c oxidase assembly. Promotes the progression of complex assembly after the association of MT-CO1/COX1 with COX4I1 and COX6C. Chaperone-like assembly factor required to stabilize newly synthesized MT-CO1/COX1 and to prevent its premature turnover. In terms of biological role, peptide involved in a broad spectrum of regulatory functions. Is a ligand for GPR173. As part of the reproductive cycle, it regulates gonadotropin-releasing hormone (GnRH) signaling in the hypothalamus and pituitary gland which augments the release of luteinizing hormone. More specifically, it regulates the expression of transcription factors CEBPB and POU2F1/OCT1 through the cAMP-PKA signaling pathway, which subsequently regulate the expression of GNRHR and KISS1. Plays a protective role in memory retention through activation of GNRHR. Regulates the secretion of AVP by hypothalamic neurons. Plays a role in the transduction of the itch sensation. Induces anxiolytic effects, reducing behavior associated with anxiety. Regulates food intake as well as satiation and satiety by increasing Nucb2 expression in neurons. In the ovary, it regulates follicular growth by stimulating granulosa cell proliferation by increasing the expression of GPR173, CREB1, CYP19A1, KITLG, FSHR, and LHCGR. It also increases the production of estradiol (E2). In the heart, it regulates contractility and relaxation by activating the AKT1-NOS3 and MAPK1-MAPK3 signaling pathways. It also plays a cardioprotective role during ischemia, where it activates the SAFE and RISK pathways. Stimulates the proliferation and differentiation of preadipocytes. In pancreatic islet cells, it induces proliferation of islet cells as well as the production of INS through activation of the MAPK1-MAPK3 signaling pathways. The sequence is that of Small integral membrane protein 20 from Mus musculus (Mouse).